The sequence spans 466 residues: Asparagine--tRNA ligase (466 aa).

The protein belongs to the class-II aminoacyl-tRNA synthetase family. As to quaternary structure, homodimer.

The protein resides in the cytoplasm. The enzyme catalyses tRNA(Asn) + L-asparagine + ATP = L-asparaginyl-tRNA(Asn) + AMP + diphosphate + H(+). In Aliivibrio fischeri (strain ATCC 700601 / ES114) (Vibrio fischeri), this protein is Asparagine--tRNA ligase.